Reading from the N-terminus, the 370-residue chain is NSFL1 cofactor p47 (370 aa).

A disordered region spans residues 54-73; the sequence is SQATPSSVSRGTAPSDNRVT. Phosphoserine occurs at positions 74, 102, and 114. 2 disordered regions span residues 80–116 and 138–157; these read HDQD…KSPN and TKSP…GYRL. The Nuclear localization signal motif lies at 109-115; the sequence is PPRKKSP. Position 140 is a phosphoserine; by CDK1 (S140). Y167 carries the post-translational modification Phosphotyrosine. Residues 172–175 carry the Nuclear localization signal motif; that stretch reads RRRH. 3 positions are modified to phosphoserine: S176, S192, and S272. In terms of domain architecture, SEP spans 179–244; that stretch reads DVHVVLKLWK…MEDHRDEDFV (66 aa). The UBX domain occupies 291–368; it reads EAEPTTNIQI…NLLNAVIVQR (78 aa).

This sequence belongs to the NSFL1C family. As to quaternary structure, part of a ternary complex containing STX5A, NSFL1C and VCP. NSFL1C forms a homotrimer that binds to one end of a VCP homohexamer. The complex binds to membranes enriched in phosphatidylethanolamine-containing lipids and promotes Golgi membrane fusion. Interaction with VCIP135 leads to dissociation of the complex via ATP hydrolysis by VCP. Binds ubiquitin and mono-ubiquitinated proteins via its N-terminal UBA-like domain when bound to VCP. Phosphorylated during mitosis. Phosphorylation inhibits interaction with Golgi membranes and is required for the fragmentation of the Golgi stacks during mitosis. Highly expressed in heart, brain, spleen, lung, liver, muscle, kidney and testis.

It localises to the nucleus. The protein localises to the golgi apparatus. It is found in the golgi stack. Its subcellular location is the chromosome. The protein resides in the cytoplasm. It localises to the cytoskeleton. The protein localises to the microtubule organizing center. It is found in the centrosome. Reduces the ATPase activity of VCP. Necessary for the fragmentation of Golgi stacks during mitosis and for VCP-mediated reassembly of Golgi stacks after mitosis. May play a role in VCP-mediated formation of transitional endoplasmic reticulum (tER). Inhibits the activity of CTSL (in vitro). Together with UBXN2B/p37, regulates the centrosomal levels of kinase AURKA/Aurora A during mitotic progression by promoting AURKA removal from centrosomes in prophase. Also, regulates spindle orientation during mitosis. The chain is NSFL1 cofactor p47 (Nsfl1c) from Rattus norvegicus (Rat).